The primary structure comprises 152 residues: MASERTFIAIKPDGVQRGLIGEILGRFERKGFKLVGLKQLTPSRELAEQHYGVHKERPFFAGLVDFITSGPVVAMVWEGDGVIASARKLIGATKPLEAEPGTIRGDLAINIGRNVIHGSDAPETAQFEIGLWFQASELSDWTPSDQGWRTEG.

ATP contacts are provided by Lys-11, Phe-59, Arg-87, Thr-93, Arg-104, and Asn-114. His-117 functions as the Pros-phosphohistidine intermediate in the catalytic mechanism.

The protein belongs to the NDK family. Homotetramer. Requires Mg(2+) as cofactor.

The protein resides in the cytoplasm. It carries out the reaction dZDP + ATP = dZTP + ADP. The catalysed reaction is a 2'-deoxyribonucleoside 5'-diphosphate + ATP = a 2'-deoxyribonucleoside 5'-triphosphate + ADP. It catalyses the reaction a ribonucleoside 5'-diphosphate + ATP = a ribonucleoside 5'-triphosphate + ADP. The protein operates within purine metabolism. Functionally, major role in the synthesis of nucleoside triphosphates other than ATP. The ATP gamma phosphate is transferred to the NDP beta phosphate via a ping-pong mechanism, using a phosphorylated active-site intermediate. In terms of biological role, (Microbial infection) Catalyzes the phosphorylation of dZDP to dZTP, when the bacterium is infected by a phage that produces the substrate for the synthesis of dZTP (2- amino-2'-deoxyadenosine 5'-triphosphate), which is then used by the phage as a DNA polymerase substrate. The protein is Nucleoside diphosphate kinase of Synechococcus sp. (strain WH7803).